The primary structure comprises 225 residues: Insulin-induced gene 2 protein (225 aa).

The Cytoplasmic portion of the chain corresponds to 1 to 28 (MAEGETKSPGPKKCGPYISSVTSQSVNL). The helical transmembrane segment at 29–51 (MIRGVVLFFIGVFLALVLNLLQI) threads the bilayer. Residues 52 to 70 (QRNVTLFPPDVIASIFSSA) lie on the Lumenal side of the membrane. A helical membrane pass occupies residues 71–88 (WWVPPCCGTASAVIGLLY). Over 89–103 (PCIDRHLGEPHKFKR) the chain is Cytoplasmic. A helical membrane pass occupies residues 104–126 (EWSSVMRCVAVFVGINHASAKVD). Residues 127-129 (FDN) are Lumenal-facing. Residues 130 to 148 (NIQLSLTLAALSIGLWWTF) traverse the membrane as a helical segment. Residues 149–153 (DRSRS) lie on the Cytoplasmic side of the membrane. At Ser-151 the chain carries Phosphoserine. A helical transmembrane segment spans residues 154-175 (GFGLGVGIAFLATVVTQLLVYN). Over 176-189 (GVYQYTSPDFLYVR) the chain is Lumenal. The chain crosses the membrane as a helical span at residues 190–207 (SWLPCIFFAGGITMGNIG). Residues 208-225 (RQLAMYECKVIAEKSHQE) lie on the Cytoplasmic side of the membrane. A Cysteine sulfenic acid (-SOH); alternate modification is found at Cys-215. A Glycyl cysteine thioester (Cys-Gly) (interchain with G-Cter in ubiquitin); alternate cross-link involves residue Cys-215. The short motif at 219 to 225 (AEKSHQE) is the KxHxx element.

Belongs to the INSIG family. In terms of assembly, interacts with SCAP; interaction is direct and only takes place in the presence of sterols; it prevents interaction between SCAP and the coat protein complex II (COPII). Associates with the SCAP-SREBP complex (composed of SCAP and SREBF1/SREBP1 or SREBF2/SREBP2); association is mediated via its interaction with SCAP and only takes place in the presence of sterols. Interacts with RNF139. Interacts with RNF145. Phosphorylation at Ser-151 by PCK1 reduces binding to oxysterol, disrupting the interaction between INSIG2 and SCAP, thereby promoting nuclear translocation of SREBP proteins (SREBF1/SREBP1 or SREBF2/SREBP2) and subsequent transcription of downstream lipogenesis-related genes. In terms of processing, polyubiquitinated by AMFR/gp78 at Cys-215 in some tissues such as adipose tissues, undifferentiated myoblasts and liver, leading to its degradation. In differentiated myotubes, Cys-215 oxidation prevents ubiquitination at the same site, resulting in protein stabilization. Post-translationally, oxidized at Cys-215 in differentiated myotubes, preventing ubiquitination at the same site, and resulting in protein stabilization.

It localises to the endoplasmic reticulum membrane. Functionally, oxysterol-binding protein that mediates feedback control of cholesterol synthesis by controlling both endoplasmic reticulum to Golgi transport of SCAP and degradation of HMGCR. Acts as a negative regulator of cholesterol biosynthesis by mediating the retention of the SCAP-SREBP complex in the endoplasmic reticulum, thereby blocking the processing of sterol regulatory element-binding proteins (SREBPs) SREBF1/SREBP1 and SREBF2/SREBP2. Binds oxysterol, including 22-hydroxycholesterol, 24-hydroxycholesterol, 25-hydroxycholesterol and 27-hydroxycholesterol, regulating interaction with SCAP and retention of the SCAP-SREBP complex in the endoplasmic reticulum. In presence of oxysterol, interacts with SCAP, retaining the SCAP-SREBP complex in the endoplasmic reticulum, thereby preventing SCAP from escorting SREBF1/SREBP1 and SREBF2/SREBP2 to the Golgi. Sterol deprivation or phosphorylation by PCK1 reduce oxysterol-binding, disrupting the interaction between INSIG2 and SCAP, thereby promoting Golgi transport of the SCAP-SREBP complex, followed by processing and nuclear translocation of SREBF1/SREBP1 and SREBF2/SREBP2. Also regulates cholesterol synthesis by regulating degradation of HMGCR: initiates the sterol-mediated ubiquitin-mediated endoplasmic reticulum-associated degradation (ERAD) of HMGCR via recruitment of the reductase to the ubiquitin ligase RNF139. This chain is Insulin-induced gene 2 protein, found in Pongo abelii (Sumatran orangutan).